Reading from the N-terminus, the 212-residue chain is Thymidylate kinase (212 aa).

Residue 9 to 16 (GIDGCGKT) participates in ATP binding.

Belongs to the thymidylate kinase family.

It carries out the reaction dTMP + ATP = dTDP + ADP. Its function is as follows. Phosphorylation of dTMP to form dTDP in both de novo and salvage pathways of dTTP synthesis. The protein is Thymidylate kinase of Synechococcus sp. (strain CC9311).